Reading from the N-terminus, the 287-residue chain is 2-dehydro-3-deoxyphosphooctonate aldolase (287 aa).

The protein belongs to the KdsA family.

Its subcellular location is the cytoplasm. The catalysed reaction is D-arabinose 5-phosphate + phosphoenolpyruvate + H2O = 3-deoxy-alpha-D-manno-2-octulosonate-8-phosphate + phosphate. The protein operates within carbohydrate biosynthesis; 3-deoxy-D-manno-octulosonate biosynthesis; 3-deoxy-D-manno-octulosonate from D-ribulose 5-phosphate: step 2/3. It functions in the pathway bacterial outer membrane biogenesis; lipopolysaccharide biosynthesis. This Bradyrhizobium sp. (strain ORS 278) protein is 2-dehydro-3-deoxyphosphooctonate aldolase.